A 331-amino-acid chain; its full sequence is Adenosine deaminase (331 aa).

Zn(2+) is bound by residues His-12 and His-14. Substrate-binding residues include His-14, Asp-16, and Gly-170. His-197 contacts Zn(2+). Residue Glu-200 is the Proton donor of the active site. Residue Asp-278 coordinates Zn(2+). Position 279 (Asp-279) interacts with substrate.

Belongs to the metallo-dependent hydrolases superfamily. Adenosine and AMP deaminases family. Adenosine deaminase subfamily. Zn(2+) serves as cofactor.

The catalysed reaction is adenosine + H2O + H(+) = inosine + NH4(+). It catalyses the reaction 2'-deoxyadenosine + H2O + H(+) = 2'-deoxyinosine + NH4(+). Its function is as follows. Catalyzes the hydrolytic deamination of adenosine and 2-deoxyadenosine. This Shewanella baltica (strain OS155 / ATCC BAA-1091) protein is Adenosine deaminase.